We begin with the raw amino-acid sequence, 864 residues long: Coiled-coil and C2 domain-containing protein 1B (864 aa).

The disordered stretch occupies residues 82-154 (QDCMTDMTGE…VNSSVAEIQH (73 aa)). Composition is skewed to acidic residues over residues 89–104 (TGED…EELL) and 111–129 (VGEE…EESE). Residues 91–118 (EDDDDDLEEDEELLAELQDVVGEEEEVE) adopt a coiled-coil conformation. Positions 142–154 (EQQVNSSVAEIQH) are enriched in polar residues. A coiled-coil region spans residues 162-209 (GMLQVLEERIGNYKEAISNAKLSNESAKARRYERGLKTLESMLSAARQ). Positions 218 to 249 (IPPPVACGKPAVSPTTDVPTTDTSKQGLGDLN) are disordered. A compositionally biased stretch (low complexity) spans 229-241 (VSPTTDVPTTDTS). Residues 385–412 (VGSLLQALQQRMEKYKSAAQQAKSSGDD) are a coiled coil. Disordered stretches follow at residues 441–463 (AELP…EEGS) and 478–502 (AGED…PTQL). The span at 444 to 453 (PVPPGFPPLP) shows a compositional bias: pro residues. 2 coiled-coil regions span residues 464 to 488 (VEKA…DEDE) and 535 to 564 (PAVQ…KNDL). Residues 685-820 (HFEDKTLKIV…ETQCEIREIV (136 aa)) enclose the C2 domain.

Belongs to the CC2D1 family.

The chain is Coiled-coil and C2 domain-containing protein 1B (cc2d1b) from Xenopus laevis (African clawed frog).